Consider the following 422-residue polypeptide: Phospholipase D Z (422 aa).

An N-terminal signal peptide occupies residues 1–18; it reads MMMKLLFLIALFGCVVNS. Asn53 is a glycosylation site (N-linked (GlcNAc...) asparagine). Residues 148–175 enclose the PLD phosphodiesterase 1 domain; that stretch reads GAGILHTKVIVVDQVSAYLGSANLDWRS. Residues His153, Lys155, and Asp160 contribute to the active site. N-linked (GlcNAc...) asparagine glycans are attached at residues Asn225 and Asn320. Residues 357–383 form the PLD phosphodiesterase 2 domain; that stretch reads FTRVNHAKYMVTDEQSYVGTSNWSEDY. Catalysis depends on residues His362, Lys364, and Asp369. An N-linked (GlcNAc...) asparagine glycan is attached at Asn378.

It belongs to the phospholipase D family.

The enzyme catalyses a 1,2-diacyl-sn-glycero-3-phosphocholine + H2O = a 1,2-diacyl-sn-glycero-3-phosphate + choline + H(+). Inhibited by butan-1-ol. Functionally, hydrolyzes membrane phospholipids, such as PtdCho (phosphatidylcholine), producing the free headgroup and PtdOH (phosphatidic acid; signaling molecule on its own). This chain is Phospholipase D Z (pldZ), found in Dictyostelium discoideum (Social amoeba).